Here is an 805-residue protein sequence, read N- to C-terminus: Mediator of RNA polymerase II transcription subunit 25 (805 aa).

Disordered stretches follow at residues 308–332 (NQMP…PQNT) and 647–691 (QQPQ…NPQL). Residues 647–678 (QQPQQAASQAPPQATQTTVQAPGQPQNPQPGA) show a composition bias toward low complexity. The LXXLL motif signature appears at 691 to 695 (LRNLL).

It belongs to the Mediator complex subunit 25 family. In terms of assembly, component of the Mediator complex.

The protein localises to the nucleus. Functionally, component of the Mediator complex, a coactivator involved in the regulated transcription of nearly all RNA polymerase II-dependent genes. Mediator functions as a bridge to convey information from gene-specific regulatory proteins to the basal RNA polymerase II transcription machinery. Mediator is recruited to promoters by direct interactions with regulatory proteins and serves as a scaffold for the assembly of a functional preinitiation complex with RNA polymerase II and the general transcription factors. The polypeptide is Mediator of RNA polymerase II transcription subunit 25 (med25) (Xenopus tropicalis (Western clawed frog)).